Reading from the N-terminus, the 44-residue chain is GHVSCGKDGRACDYHADCCNCCLGGICKPSTSWIGCSTNVFLTR.

4 disulfides stabilise this stretch: cysteine 5–cysteine 19, cysteine 12–cysteine 22, cysteine 18–cysteine 27, and cysteine 21–cysteine 36. Position 44 (arginine 44) is a propeptide, removed by a carboxypeptidase.

Belongs to the conotoxin I1 superfamily. In terms of tissue distribution, expressed by the venom duct.

It localises to the secreted. Functionally, iota-conotoxins bind to voltage-gated sodium channels (Nav) and act as agonists by shifting the voltage-dependence of activation to more hyperpolarized levels. Produces general excitatory symptoms. This is Iota-conotoxin-like R11.11 from Conus radiatus (Rayed cone).